The primary structure comprises 407 residues: Na(+)-translocating NADH-quinone reductase subunit F (407 aa).

The chain crosses the membrane as a helical span at residues 3–23 (IILGVVMFTLIVLALTVMILF). One can recognise a 2Fe-2S ferredoxin-type domain in the interval 32–126 (GDITVEINED…NLKIELPEEI (95 aa)). [2Fe-2S] cluster is bound by residues C69, C75, C78, and C110. The FAD-binding FR-type domain maps to 129-269 (VKKWTCEVIS…SGPFGEFFAK (141 aa)).

The protein belongs to the NqrF family. As to quaternary structure, composed of six subunits; NqrA, NqrB, NqrC, NqrD, NqrE and NqrF. It depends on [2Fe-2S] cluster as a cofactor. FAD serves as cofactor.

The protein localises to the cell inner membrane. The catalysed reaction is a ubiquinone + n Na(+)(in) + NADH + H(+) = a ubiquinol + n Na(+)(out) + NAD(+). Functionally, NQR complex catalyzes the reduction of ubiquinone-1 to ubiquinol by two successive reactions, coupled with the transport of Na(+) ions from the cytoplasm to the periplasm. The first step is catalyzed by NqrF, which accepts electrons from NADH and reduces ubiquinone-1 to ubisemiquinone by a one-electron transfer pathway. This Yersinia pseudotuberculosis serotype O:1b (strain IP 31758) protein is Na(+)-translocating NADH-quinone reductase subunit F.